Reading from the N-terminus, the 1044-residue chain is Diacylglycerol lipase-alpha (1044 aa).

Over 1–22 the chain is Cytoplasmic; that stretch reads MPGIVVFRRRWSVGSDDLVLPA. The chain crosses the membrane as a helical span at residues 23 to 43; that stretch reads IFLFLLHTTWFVILSVVLFGL. Residues 44-60 are Extracellular-facing; sequence VYNPHEACSLNLVDHGR. Residues 61 to 81 form a helical membrane-spanning segment; the sequence is GYLGILLSCMIAEMAIIWLSM. The Cytoplasmic segment spans residues 82-101; sequence RGGILYTEPRDSMQYVLYVR. A helical transmembrane segment spans residues 102-122; that stretch reads LAILVIEFIYAIVGIVWLTQY. Residues 123–136 are Extracellular-facing; it reads YTSCNDLTAKNVTL. The N-linked (GlcNAc...) asparagine glycan is linked to Asn-133. A helical membrane pass occupies residues 137–157; it reads GMVVCNWVVILSVCITVLCVF. Topologically, residues 158 to 1044 are cytoplasmic; sequence DPTGRTFVKL…KQDDLVISAR (887 aa). Active-site charge relay system residues include Ser-472 and Asp-524. Phosphoserine is present on residues Ser-728, Ser-730, Ser-733, Ser-744, Ser-784, Ser-786, Ser-808, Ser-810, Ser-835, Ser-849, and Ser-954. Positions 848-897 are disordered; the sequence is LSKHSQDTQPLEAALGSGGVTPERPPSATIEEEEAAGGSEGGGVAPRGEL. Residues 1013–1044 form a disordered region; the sequence is QECLATDKIRTSTPTGHGASPTKQDDLVISAR. Thr-1025 carries the post-translational modification Phosphothreonine.

This sequence belongs to the AB hydrolase superfamily. Lipase family. Interacts (via C-terminal) with CAMK2A; leading to the phosphorylation and inhibition of DAGLA enzymatic activity. Interacts (via PPXXF motif) with HOMER1 and HOMER2; this interaction is required for DAGLA membrane localization. Requires Ca(2+) as cofactor. Phosphorylated at Ser-784 and Ser-810 by CAMK2A; phosphorylation by CAMK2A inhibits diacylglycerol lipase activity. As to expression, highly expressed by principal cells in the hippocampus. In embryonic brains, it is present in axonal tracts, while in adults it localizes to dendritic fields, correlating with the developmental change in requirement for 2-AG synthesis from the pre- to the postsynaptic compartment. Concentrated in heads of dendritic spines throughout the hippocampal formation. Highly compartmentalized into a wide perisynaptic annulus around the postsynaptic density of axospinous contacts but not intrasynaptically (at protein level).

It localises to the cell membrane. The protein localises to the cell projection. It is found in the dendritic spine membrane. Its subcellular location is the postsynaptic density membrane. The protein resides in the early endosome membrane. The catalysed reaction is a 1,2-diacyl-sn-glycerol + H2O = a 2-acylglycerol + a fatty acid + H(+). It catalyses the reaction 1-octadecanoyl-2-(5Z,8Z,11Z,14Z-eicosatetraenoyl)-sn-glycerol + H2O = 2-(5Z,8Z,11Z,14Z-eicosatetraenoyl)-glycerol + octadecanoate + H(+). The enzyme catalyses 1,2-di-(9Z-octadecenoyl)-sn-glycerol + H2O = 2-(9Z-octadecenoyl)-glycerol + (9Z)-octadecenoate + H(+). It carries out the reaction 1-(9Z-octadecenoyl)-2-(5Z,8Z,11Z,14Z-eicosatetraenoyl)-sn-glycerol + H2O = 2-(5Z,8Z,11Z,14Z-eicosatetraenoyl)-glycerol + (9Z)-octadecenoate + H(+). The catalysed reaction is 1-(9Z-octadecenoyl)-2-octadecanoyl-sn-glycerol + H2O = 2-octadecanoylglycerol + (9Z)-octadecenoate + H(+). It catalyses the reaction 1-(9Z-octadecenoyl)-2-(9Z,12Z-octadecadienoyl)-sn-glycerol + H2O = 2-(9Z,12Z-octadecadienoyl)-glycerol + (9Z)-octadecenoate + H(+). The enzyme catalyses 1-(9Z-octadecenoyl)-2-O-(5Z,8Z,11Z,14Z-eicosatetraenyl)-sn-glycerol + H2O = 2-O-(5Z,8Z,11Z,14Z)-eicosatetraenylglycerol + (9Z)-octadecenoate + H(+). Its activity is regulated as follows. Inhibited by 1,2,3-triazole urea covalent inhibitor KT172, DH376 and DO34. Inhibited by p-hydroxy-mercuri-benzoate and HgCl(2), but not to PMSF. Also inhibited by RHC80267. Diacylglycerol lipase activity is inhibited by the phosphorylation of Ser-784 and Ser-810 by CAMK2A. Its function is as follows. Serine hydrolase that hydrolyzes arachidonic acid-esterified diacylglycerols (DAGs) to produce the principal endocannabinoid (eCB), 2-arachidonoylglycerol (2-AG). Preferentially hydrolyzes sn-1 fatty acids from diacylglycerols (DAG) that contain arachidonic acid (AA) esterified at the sn-2 position to biosynthesize 2-AG. Has negligible activity against other lipids including monoacylglycerols and phospholipids. Plays a key role in regulating 2-AG signaling in the central nervous system (CNS). Controls the activity of 2-AG as a retrograde messenger at neuronal synapses. Supports axonal growth during development and adult neurogenesis. Plays a role for eCB signaling in the physiological regulation of anxiety and depressive behaviors. Also regulates neuroinflammatory responses in the brain, in particular, LPS-induced microglial activation. In Mus musculus (Mouse), this protein is Diacylglycerol lipase-alpha (Dagla).